The following is a 173-amino-acid chain: Mesencephalic astrocyte-derived neurotrophic factor homolog (173 aa).

The N-terminal stretch at 1–22 (MKTWHMVVVIGFLATLAQTSLA) is a signal peptide. 4 cysteine pairs are disulfide-bonded: Cys-28–Cys-114, Cys-31–Cys-103, Cys-61–Cys-72, and Cys-148–Cys-151.

The protein belongs to the ARMET family.

Its subcellular location is the secreted. Its function is as follows. Required during the maturation of the embryonic nervous system for maintenance of neuronal and cuticular connectivity. Essential for maintenance of dopaminergic neurons and dopamine levels. The sequence is that of Mesencephalic astrocyte-derived neurotrophic factor homolog from Drosophila simulans (Fruit fly).